A 208-amino-acid polypeptide reads, in one-letter code: FMN-dependent NADH:quinone oxidoreductase 4 (208 aa).

This sequence belongs to the azoreductase type 1 family. Homodimer. FMN serves as cofactor.

The enzyme catalyses 2 a quinone + NADH + H(+) = 2 a 1,4-benzosemiquinone + NAD(+). It catalyses the reaction N,N-dimethyl-1,4-phenylenediamine + anthranilate + 2 NAD(+) = 2-(4-dimethylaminophenyl)diazenylbenzoate + 2 NADH + 2 H(+). Functionally, quinone reductase that provides resistance to thiol-specific stress caused by electrophilic quinones. In terms of biological role, also exhibits azoreductase activity. Catalyzes the reductive cleavage of the azo bond in aromatic azo compounds to the corresponding amines. In Bacillus anthracis, this protein is FMN-dependent NADH:quinone oxidoreductase 4.